A 1215-amino-acid chain; its full sequence is DNA-directed RNA polymerase subunit beta' (1215 aa).

The Zn(2+) site is built by Cys-60, Cys-62, Cys-75, and Cys-78. 3 residues coordinate Mg(2+): Asp-450, Asp-452, and Asp-454. Residues Cys-818, Cys-892, Cys-899, and Cys-902 each contribute to the Zn(2+) site.

Belongs to the RNA polymerase beta' chain family. As to quaternary structure, the RNAP catalytic core consists of 2 alpha, 1 beta, 1 beta' and 1 omega subunit. When a sigma factor is associated with the core the holoenzyme is formed, which can initiate transcription. Mg(2+) serves as cofactor. Zn(2+) is required as a cofactor.

It carries out the reaction RNA(n) + a ribonucleoside 5'-triphosphate = RNA(n+1) + diphosphate. Functionally, DNA-dependent RNA polymerase catalyzes the transcription of DNA into RNA using the four ribonucleoside triphosphates as substrates. The protein is DNA-directed RNA polymerase subunit beta' of Streptococcus suis (strain 98HAH33).